We begin with the raw amino-acid sequence, 579 residues long: Tricyclene synthase 0e23, chloroplastic (579 aa).

The N-terminal 66 residues, 1 to 66 (MAFCISYLGA…ALCLNAHSTS (66 aa)), are a transit peptide targeting the chloroplast. Residues Asn27, Asn204, and Asn317 are each glycosylated (N-linked (GlcNAc...) asparagine). Residues Asp336 and Asp340 each coordinate Mg(2+). A DDXXD motif motif is present at residues 336-340 (DDIFD). Asn382 and Asn463 each carry an N-linked (GlcNAc...) asparagine glycan. Mg(2+) is bound by residues Asn480 and Glu488. Asn507 is a glycosylation site (N-linked (GlcNAc...) asparagine).

Belongs to the terpene synthase family. Tpsg subfamily. It depends on Mg(2+) as a cofactor. The cofactor is Mn(2+). In terms of tissue distribution, accumulates in flowers; mostly expressed in both upper and lower petal lobes, and, to a lower extent, in tube and stamens.

Its subcellular location is the plastid. It is found in the chloroplast stroma. It carries out the reaction (2E)-geranyl diphosphate = tricyclene + diphosphate. The enzyme catalyses (2E)-geranyl diphosphate = (E)-beta-ocimene + diphosphate. It functions in the pathway secondary metabolite biosynthesis; terpenoid biosynthesis. Functionally, contributes to floral scent emission. This is Tricyclene synthase 0e23, chloroplastic (0e23) from Antirrhinum majus (Garden snapdragon).